The chain runs to 127 residues: Large ribosomal subunit protein bL19 (127 aa).

The protein belongs to the bacterial ribosomal protein bL19 family.

In terms of biological role, this protein is located at the 30S-50S ribosomal subunit interface and may play a role in the structure and function of the aminoacyl-tRNA binding site. The polypeptide is Large ribosomal subunit protein bL19 (Roseobacter denitrificans (strain ATCC 33942 / OCh 114) (Erythrobacter sp. (strain OCh 114))).